Consider the following 409-residue polypeptide: Elongation factor Tu (409 aa).

Residues 10–214 form the tr-type G domain; sequence KPHVNVGTIG…AVDSYIPTPE (205 aa). A G1 region spans residues 19 to 26; the sequence is GHVDHGKT. Residue 19-26 participates in GTP binding; that stretch reads GHVDHGKT. Threonine 26 serves as a coordination point for Mg(2+). The segment at 60–64 is G2; sequence GITIN. The segment at 81–84 is G3; the sequence is DCPG. GTP contacts are provided by residues 81 to 85 and 136 to 139; these read DCPGH and NKVD. A G4 region spans residues 136–139; the sequence is NKVD. A G5 region spans residues 174–176; sequence SAL.

It belongs to the TRAFAC class translation factor GTPase superfamily. Classic translation factor GTPase family. EF-Tu/EF-1A subfamily. In terms of assembly, monomer.

Its subcellular location is the cytoplasm. The enzyme catalyses GTP + H2O = GDP + phosphate + H(+). GTP hydrolase that promotes the GTP-dependent binding of aminoacyl-tRNA to the A-site of ribosomes during protein biosynthesis. The sequence is that of Elongation factor Tu from Synechococcus sp. (strain JA-3-3Ab) (Cyanobacteria bacterium Yellowstone A-Prime).